A 443-amino-acid polypeptide reads, in one-letter code: Tol-Pal system protein TolB (443 aa).

Positions 1–24 are cleaved as a signal peptide; that stretch reads MSFQIRVFTAILAVLSLFTAPVLA. Residues 424–443 are disordered; the sequence is LRPVRTPEGGSDPSWSPLQR.

Belongs to the TolB family. In terms of assembly, the Tol-Pal system is composed of five core proteins: the inner membrane proteins TolA, TolQ and TolR, the periplasmic protein TolB and the outer membrane protein Pal. They form a network linking the inner and outer membranes and the peptidoglycan layer.

Its subcellular location is the periplasm. Part of the Tol-Pal system, which plays a role in outer membrane invagination during cell division and is important for maintaining outer membrane integrity. In Roseobacter denitrificans (strain ATCC 33942 / OCh 114) (Erythrobacter sp. (strain OCh 114)), this protein is Tol-Pal system protein TolB.